A 210-amino-acid polypeptide reads, in one-letter code: MADNWGSENVVADAAPATEAPEVALFGKWSLQSVNVSDISLVDYIPVKEKSAKYLPHSAGRFQVRRFRKAACPIVERLANSLMMHGRNNGKKLMTVRIVKHAFEIIYLLTGENPVQVLVNAVINSGPREDSTRIGRAGTVRRQAVDVAPLRRVNQAIWLLCTGAREAAFRNVKTIAECLADELINAAKGSSNSYAIKKKDELERVAKSNR.

The protein belongs to the universal ribosomal protein uS7 family. Component of the small ribosomal subunit. Part of the small subunit (SSU) processome, composed of more than 70 proteins and the RNA chaperone small nucleolar RNA (snoRNA) U3.

It is found in the cytoplasm. Its subcellular location is the nucleus. It localises to the nucleolus. Functionally, component of the small ribosomal subunit. The ribosome is a large ribonucleoprotein complex responsible for the synthesis of proteins in the cell. Part of the small subunit (SSU) processome, first precursor of the small eukaryotic ribosomal subunit. During the assembly of the SSU processome in the nucleolus, many ribosome biogenesis factors, an RNA chaperone and ribosomal proteins associate with the nascent pre-rRNA and work in concert to generate RNA folding, modifications, rearrangements and cleavage as well as targeted degradation of pre-ribosomal RNA by the RNA exosome. The sequence is that of Small ribosomal subunit protein uS7 (rps-5) from Caenorhabditis elegans.